Reading from the N-terminus, the 367-residue chain is 2'-5'-oligoadenylate synthase 1A (367 aa).

The segment at 14–61 is interaction with dsRNA; sequence DKFIEDYLLPDTTFGADVKSAVNVVCDFLKERCFQGAAHPVRVSKVVK. Ser64 is a binding site for ATP. Asp76, Asp78, and Asp149 together coordinate Mg(2+). Residues 201 to 211 are interaction with dsRNA; the sequence is QRPTKLKSLIR. 3 residues coordinate ATP: Arg211, Lys214, and Gln231. Cys364 carries S-geranylgeranyl cysteine lipidation.

Belongs to the 2-5A synthase family. As to quaternary structure, monomer. Homotetramer. Interacts with OAS1D; the interaction inhibits OAS1A catalytic activity. Requires Mg(2+) as cofactor. C-terminal prenylated. As to expression, expressed in oocytes and granulosa cells of ovary, in intestine, stomach, spleen and uterus (at protein level). Expressed at high levels in the digestive tract and lymphoid organs. Expressed in ovary and spleen.

It localises to the cytoplasm. It is found in the mitochondrion. Its subcellular location is the nucleus. The protein resides in the microsome. The protein localises to the endoplasmic reticulum. It catalyses the reaction 3 ATP = 5'-triphosphoadenylyl-(2'-&gt;5')-adenylyl-(2'-&gt;5')-adenosine + 2 diphosphate. Its activity is regulated as follows. Produced as a latent enzyme which is activated by dsRNA generated during the course of viral infection. The dsRNA activator must be at least 15 nucleotides long, and no modification of the 2'-hydroxyl group is tolerated. ssRNA or dsDNA do not act as activators. Its function is as follows. Interferon-induced, dsRNA-activated antiviral enzyme which plays a critical role in cellular innate antiviral response. In addition, it may also play a role in other cellular processes such as apoptosis, cell growth, differentiation and gene regulation. Synthesizes higher oligomers of 2'-5'-oligoadenylates (2-5A) from ATP which then bind to the inactive monomeric form of ribonuclease L (RNase L) leading to its dimerization and subsequent activation. Activation of RNase L leads to degradation of cellular as well as viral RNA, resulting in the inhibition of protein synthesis, thus terminating viral replication. Can mediate the antiviral effect via the classical RNase L-dependent pathway or an alternative antiviral pathway independent of RNase L. This chain is 2'-5'-oligoadenylate synthase 1A (Oas1a), found in Mus musculus (Mouse).